The primary structure comprises 839 residues: Glycerol-3-phosphate acyltransferase (839 aa).

An HXXXXD motif motif is present at residues 309–314; sequence CHRSHI.

This sequence belongs to the GPAT/DAPAT family.

Its subcellular location is the cell inner membrane. It carries out the reaction sn-glycerol 3-phosphate + an acyl-CoA = a 1-acyl-sn-glycero-3-phosphate + CoA. It functions in the pathway phospholipid metabolism; CDP-diacylglycerol biosynthesis; CDP-diacylglycerol from sn-glycerol 3-phosphate: step 1/3. The protein is Glycerol-3-phosphate acyltransferase of Pseudomonas fluorescens (strain SBW25).